The primary structure comprises 641 residues: Threonine--tRNA ligase (641 aa).

One can recognise a TGS domain in the interval 1 to 61 (MPIITLPDGT…TQNSHIQIIT (61 aa)). The segment at 242-533 (DHRKLGKKYS…LIENYSGNFP (292 aa)) is catalytic. Residues Cys-333, His-384, and His-510 each contribute to the Zn(2+) site.

It belongs to the class-II aminoacyl-tRNA synthetase family. As to quaternary structure, homodimer. The cofactor is Zn(2+).

It is found in the cytoplasm. The catalysed reaction is tRNA(Thr) + L-threonine + ATP = L-threonyl-tRNA(Thr) + AMP + diphosphate + H(+). In terms of biological role, catalyzes the attachment of threonine to tRNA(Thr) in a two-step reaction: L-threonine is first activated by ATP to form Thr-AMP and then transferred to the acceptor end of tRNA(Thr). Also edits incorrectly charged L-seryl-tRNA(Thr). The sequence is that of Threonine--tRNA ligase from Prochlorococcus marinus (strain NATL2A).